Reading from the N-terminus, the 135-residue chain is Nucleoside diphosphate kinase (135 aa).

ATP contacts are provided by Lys10, Phe58, Arg86, Thr92, Arg103, and Asn113. The active-site Pros-phosphohistidine intermediate is the His116.

The protein belongs to the NDK family. As to quaternary structure, homotetramer. Mg(2+) serves as cofactor.

It localises to the cytoplasm. The catalysed reaction is a 2'-deoxyribonucleoside 5'-diphosphate + ATP = a 2'-deoxyribonucleoside 5'-triphosphate + ADP. It carries out the reaction a ribonucleoside 5'-diphosphate + ATP = a ribonucleoside 5'-triphosphate + ADP. Functionally, major role in the synthesis of nucleoside triphosphates other than ATP. The ATP gamma phosphate is transferred to the NDP beta phosphate via a ping-pong mechanism, using a phosphorylated active-site intermediate. The polypeptide is Nucleoside diphosphate kinase (Nocardioides sp. (strain ATCC BAA-499 / JS614)).